A 248-amino-acid chain; its full sequence is 3-deoxy-manno-octulosonate cytidylyltransferase (248 aa).

Belongs to the KdsB family.

It localises to the cytoplasm. The catalysed reaction is 3-deoxy-alpha-D-manno-oct-2-ulosonate + CTP = CMP-3-deoxy-beta-D-manno-octulosonate + diphosphate. It functions in the pathway nucleotide-sugar biosynthesis; CMP-3-deoxy-D-manno-octulosonate biosynthesis; CMP-3-deoxy-D-manno-octulosonate from 3-deoxy-D-manno-octulosonate and CTP: step 1/1. Its pathway is bacterial outer membrane biogenesis; lipopolysaccharide biosynthesis. Activates KDO (a required 8-carbon sugar) for incorporation into bacterial lipopolysaccharide in Gram-negative bacteria. The sequence is that of 3-deoxy-manno-octulosonate cytidylyltransferase from Shigella dysenteriae serotype 1 (strain Sd197).